The following is a 365-amino-acid chain: Alanine racemase (365 aa).

K35 functions as the Proton acceptor; specific for D-alanine in the catalytic mechanism. N6-(pyridoxal phosphate)lysine is present on K35. A substrate-binding site is contributed by R130. Catalysis depends on Y256, which acts as the Proton acceptor; specific for L-alanine. Residue M304 participates in substrate binding.

Belongs to the alanine racemase family. Pyridoxal 5'-phosphate is required as a cofactor.

It catalyses the reaction L-alanine = D-alanine. It functions in the pathway amino-acid biosynthesis; D-alanine biosynthesis; D-alanine from L-alanine: step 1/1. Functionally, catalyzes the interconversion of L-alanine and D-alanine. May also act on other amino acids. The protein is Alanine racemase (alr) of Acidovorax sp. (strain JS42).